The following is a 753-amino-acid chain: Catalase-peroxidase (753 aa).

A cross-link (tryptophyl-tyrosyl-methioninium (Trp-Tyr) (with M-264)) is located at residues 90 to 238 (WHSAGTYRVT…LASSHMGLIY (149 aa)). The active-site Proton acceptor is H91. The interval 196 to 220 (SEGQEGHEGHGVVQGDESKKQHTDI) is disordered. The tryptophyl-tyrosyl-methioninium (Tyr-Met) (with W-90) cross-link spans 238–264 (YVNPEGPDGIPDPVASAKDIRVTFGRM). A heme b-binding site is contributed by H279.

The protein belongs to the peroxidase family. Peroxidase/catalase subfamily. In terms of assembly, homodimer or homotetramer. Requires heme b as cofactor. In terms of processing, formation of the three residue Trp-Tyr-Met cross-link is important for the catalase, but not the peroxidase activity of the enzyme.

It localises to the cytoplasm. The catalysed reaction is H2O2 + AH2 = A + 2 H2O. The enzyme catalyses 2 H2O2 = O2 + 2 H2O. Its activity is regulated as follows. Inhibited by KCN. In terms of biological role, bifunctional enzyme with both catalase and broad-spectrum peroxidase activity. This Neurospora crassa (strain ATCC 24698 / 74-OR23-1A / CBS 708.71 / DSM 1257 / FGSC 987) protein is Catalase-peroxidase.